The primary structure comprises 271 residues: Thiazole synthase (271 aa).

Catalysis depends on K95, which acts as the Schiff-base intermediate with DXP. Residues G156, 182 to 183 (AG), and 204 to 205 (NT) contribute to the 1-deoxy-D-xylulose 5-phosphate site.

Belongs to the ThiG family. As to quaternary structure, homotetramer. Forms heterodimers with either ThiH or ThiS.

The protein localises to the cytoplasm. It carries out the reaction [ThiS sulfur-carrier protein]-C-terminal-Gly-aminoethanethioate + 2-iminoacetate + 1-deoxy-D-xylulose 5-phosphate = [ThiS sulfur-carrier protein]-C-terminal Gly-Gly + 2-[(2R,5Z)-2-carboxy-4-methylthiazol-5(2H)-ylidene]ethyl phosphate + 2 H2O + H(+). Its pathway is cofactor biosynthesis; thiamine diphosphate biosynthesis. Its function is as follows. Catalyzes the rearrangement of 1-deoxy-D-xylulose 5-phosphate (DXP) to produce the thiazole phosphate moiety of thiamine. Sulfur is provided by the thiocarboxylate moiety of the carrier protein ThiS. In vitro, sulfur can be provided by H(2)S. The protein is Thiazole synthase of Yersinia pseudotuberculosis serotype O:1b (strain IP 31758).